The primary structure comprises 46 residues: MTKRTLRGSVRKKKRTSGFRARMETPTGRRVIKARRSRGRVRLTTV.

Over residues Met-1–Ser-17 the composition is skewed to basic residues. The tract at residues Met-1–Pro-26 is disordered.

It belongs to the bacterial ribosomal protein bL34 family.

The chain is Large ribosomal subunit protein bL34 (rpmH) from Pseudanabaena sp. (strain PCC 6903).